The sequence spans 512 residues: Maturase K (512 aa).

This sequence belongs to the intron maturase 2 family. MatK subfamily.

It localises to the plastid. It is found in the chloroplast. Usually encoded in the trnK tRNA gene intron. Probably assists in splicing its own and other chloroplast group II introns. The protein is Maturase K of Lemna minor (Common duckweed).